The primary structure comprises 130 residues: MGIVGVGIDLVSIPEFAEQVDQPGTVFSETFTPGERRDASDKSSSAARHLAARWAAKEAVIKAWSGSRFAQRPVLREDIHRDIEVVTDMWGRPRVRLSGDIAKHLADVTIHVSLTHEKDTAAAVAILETP.

Mg(2+)-binding residues include Asp9 and Glu58.

The protein belongs to the P-Pant transferase superfamily. AcpS family. Mg(2+) serves as cofactor.

The protein localises to the cytoplasm. The catalysed reaction is apo-[ACP] + CoA = holo-[ACP] + adenosine 3',5'-bisphosphate + H(+). In terms of biological role, transfers the 4'-phosphopantetheine moiety from coenzyme A to a Ser of acyl-carrier-protein. This chain is Holo-[acyl-carrier-protein] synthase, found in Mycolicibacterium paratuberculosis (strain ATCC BAA-968 / K-10) (Mycobacterium paratuberculosis).